The sequence spans 237 residues: E3 ubiquitin-protein ligase RNF166 (237 aa).

The RING-type zinc-finger motif lies at 33 to 73; the sequence is CPICLEVYHRPVAIGSCGHTFCGECLQPCLQVPSPLCPLCR. The Zn(2+) site is built by Cys-98, Cys-101, His-113, and Cys-117. A C2HC RNF-type zinc finger spans residues 98 to 117; the sequence is CRGCNKKVTLAKMRAHISSC. The region spanning 221–237 is the UIM domain; that stretch reads DEEAAFQAALALSLSEN.

The protein resides in the cytoplasm. It carries out the reaction S-ubiquitinyl-[E2 ubiquitin-conjugating enzyme]-L-cysteine + [acceptor protein]-L-lysine = [E2 ubiquitin-conjugating enzyme]-L-cysteine + N(6)-ubiquitinyl-[acceptor protein]-L-lysine.. The protein operates within protein modification; protein ubiquitination. Its function is as follows. E3 ubiquitin-protein ligase that promotes the ubiquitination of different substrates. In turn, participates in different biological processes including interferon production or autophagy. Plays a role in the activation of RNA virus-induced interferon-beta production by promoting the ubiquitination of TRAF3 and TRAF6. Also plays a role in the early recruitment of autophagy adapters to bacteria. Mediates 'Lys-29' and 'Lys-33'-linked ubiquitination of SQSTM1 leading to xenophagic targeting of bacteria and inhibition of their replication. In Mus musculus (Mouse), this protein is E3 ubiquitin-protein ligase RNF166 (Rnf166).